We begin with the raw amino-acid sequence, 279 residues long: Tryptophan synthase alpha chain (279 aa).

Active-site proton acceptor residues include glutamate 50 and aspartate 61.

This sequence belongs to the TrpA family. In terms of assembly, tetramer of two alpha and two beta chains.

The catalysed reaction is (1S,2R)-1-C-(indol-3-yl)glycerol 3-phosphate + L-serine = D-glyceraldehyde 3-phosphate + L-tryptophan + H2O. It functions in the pathway amino-acid biosynthesis; L-tryptophan biosynthesis; L-tryptophan from chorismate: step 5/5. Its function is as follows. The alpha subunit is responsible for the aldol cleavage of indoleglycerol phosphate to indole and glyceraldehyde 3-phosphate. This is Tryptophan synthase alpha chain from Allorhizobium ampelinum (strain ATCC BAA-846 / DSM 112012 / S4) (Agrobacterium vitis (strain S4)).